The following is a 108-amino-acid chain: Thiosulfate sulfurtransferase GlpE (108 aa).

The 89-residue stretch at 17 to 105 (QEKEAVLVDI…WQRQFPAEVA (89 aa)) folds into the Rhodanese domain. Cys65 (cysteine persulfide intermediate) is an active-site residue.

Belongs to the GlpE family.

The protein localises to the cytoplasm. The catalysed reaction is thiosulfate + hydrogen cyanide = thiocyanate + sulfite + 2 H(+). It catalyses the reaction thiosulfate + [thioredoxin]-dithiol = [thioredoxin]-disulfide + hydrogen sulfide + sulfite + 2 H(+). Its function is as follows. Transferase that catalyzes the transfer of sulfur from thiosulfate to thiophilic acceptors such as cyanide or dithiols. May function in a CysM-independent thiosulfate assimilation pathway by catalyzing the conversion of thiosulfate to sulfite, which can then be used for L-cysteine biosynthesis. The protein is Thiosulfate sulfurtransferase GlpE of Escherichia coli O45:K1 (strain S88 / ExPEC).